The primary structure comprises 466 residues: 23S rRNA (uracil(1939)-C(5))-methyltransferase RlmD (466 aa).

The region spanning Met-1–Glu-54 is the TRAM domain. 4 residues coordinate [4Fe-4S] cluster: Cys-67, Cys-73, Cys-76, and Cys-155. Gln-264, Phe-293, Asn-298, Glu-314, Asn-342, and Asp-363 together coordinate S-adenosyl-L-methionine. The active-site Nucleophile is the Cys-393.

This sequence belongs to the class I-like SAM-binding methyltransferase superfamily. RNA M5U methyltransferase family. RlmD subfamily.

It carries out the reaction uridine(1939) in 23S rRNA + S-adenosyl-L-methionine = 5-methyluridine(1939) in 23S rRNA + S-adenosyl-L-homocysteine + H(+). Its function is as follows. Catalyzes the formation of 5-methyl-uridine at position 1939 (m5U1939) in 23S rRNA. This is 23S rRNA (uracil(1939)-C(5))-methyltransferase RlmD from Bordetella pertussis (strain Tohama I / ATCC BAA-589 / NCTC 13251).